A 409-amino-acid polypeptide reads, in one-letter code: Multifunctional CCA protein (409 aa).

ATP-binding residues include Gly8 and Arg11. CTP contacts are provided by Gly8 and Arg11. Residues Glu21 and Asp23 each contribute to the Mg(2+) site. 3 residues coordinate ATP: Arg91, Arg137, and Arg140. 3 residues coordinate CTP: Arg91, Arg137, and Arg140. In terms of domain architecture, HD spans 228 to 329 (TGVHTLMVLT…LKALEGLDAF (102 aa)).

This sequence belongs to the tRNA nucleotidyltransferase/poly(A) polymerase family. Bacterial CCA-adding enzyme type 1 subfamily. In terms of assembly, monomer. Can also form homodimers and oligomers. The cofactor is Mg(2+). Ni(2+) serves as cofactor.

The catalysed reaction is a tRNA precursor + 2 CTP + ATP = a tRNA with a 3' CCA end + 3 diphosphate. It carries out the reaction a tRNA with a 3' CCA end + 2 CTP + ATP = a tRNA with a 3' CCACCA end + 3 diphosphate. Its function is as follows. Catalyzes the addition and repair of the essential 3'-terminal CCA sequence in tRNAs without using a nucleic acid template. Adds these three nucleotides in the order of C, C, and A to the tRNA nucleotide-73, using CTP and ATP as substrates and producing inorganic pyrophosphate. tRNA 3'-terminal CCA addition is required both for tRNA processing and repair. Also involved in tRNA surveillance by mediating tandem CCA addition to generate a CCACCA at the 3' terminus of unstable tRNAs. While stable tRNAs receive only 3'-terminal CCA, unstable tRNAs are marked with CCACCA and rapidly degraded. This Thioalkalivibrio sulfidiphilus (strain HL-EbGR7) protein is Multifunctional CCA protein.